The chain runs to 363 residues: NADH-quinone oxidoreductase subunit H (363 aa).

9 helical membrane passes run 62-82 (GPMYVGMGLFQAFADVFKLLF), 94-114 (AIFVIAPLLTLAPSFAAWAVV), 127-147 (VGLLYLLAMTSLGVYGIILAG), 166-186 (VVSYEIAMGFALVGVMIAAGS), 202-222 (FFDWFLIPLFPLFIVYWVSGV), 239-257 (IVAGHMVEYSGSVFALFFL), 264-286 (ILVSFLISIFFLGGWLSPIQGWV), 293-313 (LIDWVWNGGWPWLLFKVLFFA), and 339-359 (FIPLTIVWIAVTALMVFSGVI).

Belongs to the complex I subunit 1 family. In terms of assembly, NDH-1 is composed of 14 different subunits. Subunits NuoA, H, J, K, L, M, N constitute the membrane sector of the complex.

Its subcellular location is the cell inner membrane. It carries out the reaction a quinone + NADH + 5 H(+)(in) = a quinol + NAD(+) + 4 H(+)(out). Functionally, NDH-1 shuttles electrons from NADH, via FMN and iron-sulfur (Fe-S) centers, to quinones in the respiratory chain. The immediate electron acceptor for the enzyme in this species is believed to be ubiquinone. Couples the redox reaction to proton translocation (for every two electrons transferred, four hydrogen ions are translocated across the cytoplasmic membrane), and thus conserves the redox energy in a proton gradient. This subunit may bind ubiquinone. The protein is NADH-quinone oxidoreductase subunit H of Xylella fastidiosa (strain 9a5c).